Reading from the N-terminus, the 257-residue chain is Putative pentatricopeptide repeat-containing protein At1g43010 (257 aa).

PPR repeat units lie at residues 133–168 and 169–203; these read KMRD…GFLL and KPYL…NMEV.

This sequence belongs to the PPR family. P subfamily.

The chain is Putative pentatricopeptide repeat-containing protein At1g43010 from Arabidopsis thaliana (Mouse-ear cress).